Reading from the N-terminus, the 370-residue chain is Platelet-derived growth factor D (370 aa).

The first 23 residues, 1 to 23 (MQRLVLVSILLCANFSCYPDTFA), serve as a signal peptide directing secretion. Residues 52 to 170 (REENIQVTSN…PGFKIYYSFV (119 aa)) enclose the CUB domain. Cys109 and Cys131 are joined by a disulfide. The N-linked (GlcNAc...) asparagine glycan is linked to Asn276. 2 disulfide bridges follow: Cys302-Cys360 and Cys306-Cys362.

Belongs to the PDGF/VEGF growth factor family. As to quaternary structure, homodimer; disulfide-linked. Interacts with PDGFRB homodimers, and with heterodimers formed by PDGFRA and PDGFRB. In terms of processing, activated by proteolytic cleavage. Proteolytic removal of the N-terminal CUB domain releasing the core domain is necessary for unmasking the receptor-binding epitopes of the core domain. Cleavage after Arg-247 or Arg-249 by urokinase plasminogen activator gives rise to the active form. As to expression, expressed at high levels in developing heart, lung, kidney and some muscle derivatives. Moderately expressed in liver, brain and testis. In the kidney, localized to glomerular mesangial cells and vascular smooth muscle cells. Up-regulated in areas of renal fibrosis. In mice with unilateral ureteral obstruction, expressed in interstitial cells at day 4, with an increased to maximal expression at day 14.

It localises to the secreted. In terms of biological role, growth factor that plays an essential role in the regulation of embryonic development, cell proliferation, cell migration, survival and chemotaxis. Potent mitogen for cells of mesenchymal origin. Plays an important role in wound healing. Has oncogenic potential and can induce tumor formation. Induces macrophage recruitment, increased interstitial pressure, and blood vessel maturation during angiogenesis. Can initiate events that lead to a mesangial proliferative glomerulonephritis, including influx of monocytes and macrophages and production of extracellular matrix. This Mus musculus (Mouse) protein is Platelet-derived growth factor D (Pdgfd).